The chain runs to 185 residues: Elongation factor P (185 aa).

It belongs to the elongation factor P family.

It is found in the cytoplasm. The protein operates within protein biosynthesis; polypeptide chain elongation. In terms of biological role, involved in peptide bond synthesis. Stimulates efficient translation and peptide-bond synthesis on native or reconstituted 70S ribosomes in vitro. Probably functions indirectly by altering the affinity of the ribosome for aminoacyl-tRNA, thus increasing their reactivity as acceptors for peptidyl transferase. This is Elongation factor P from Deinococcus deserti (strain DSM 17065 / CIP 109153 / LMG 22923 / VCD115).